A 321-amino-acid chain; its full sequence is N-acetyl-gamma-glutamyl-phosphate reductase (321 aa).

Residue cysteine 131 is part of the active site.

Belongs to the NAGSA dehydrogenase family. Type 1 subfamily.

It is found in the cytoplasm. The enzyme catalyses N-acetyl-L-glutamate 5-semialdehyde + phosphate + NADP(+) = N-acetyl-L-glutamyl 5-phosphate + NADPH + H(+). The protein operates within amino-acid biosynthesis; L-arginine biosynthesis; N(2)-acetyl-L-ornithine from L-glutamate: step 3/4. Catalyzes the NADPH-dependent reduction of N-acetyl-5-glutamyl phosphate to yield N-acetyl-L-glutamate 5-semialdehyde. This Christiangramia forsetii (strain DSM 17595 / CGMCC 1.15422 / KT0803) (Gramella forsetii) protein is N-acetyl-gamma-glutamyl-phosphate reductase.